Consider the following 309-residue polypeptide: Mitochondrial fission regulator 1-like (309 aa).

A disordered region spans residues 189-221 (DVTEEDEEEEEEEDREEEEEDVSELVPDPMPPV). Over residues 190 to 211 (VTEEDEEEEEEEDREEEEEDVS) the composition is skewed to acidic residues. Position 253 is a phosphoserine (serine 253).

The protein belongs to the MTFR1 family.

It is found in the mitochondrion outer membrane. Mitochondrial protein required for adaptation of miochondrial dynamics to metabolic changes. Regulates mitochondrial morphology at steady state and mediates AMPK-dependent stress-induced mitochondrial fragmentation via the control of OPA1 levels. The protein is Mitochondrial fission regulator 1-like (mtfr1l) of Danio rerio (Zebrafish).